Reading from the N-terminus, the 144-residue chain is UPF0178 protein Exig_1155 (144 aa).

The tract at residues 110–144 is disordered; sequence IRRAGGRTKGPKKRTRQEDASFEQSFSRLLTEKTD. Residues 113–124 are compositionally biased toward basic residues; sequence AGGRTKGPKKRT.

Belongs to the UPF0178 family.

The sequence is that of UPF0178 protein Exig_1155 from Exiguobacterium sibiricum (strain DSM 17290 / CCUG 55495 / CIP 109462 / JCM 13490 / 255-15).